The following is a 211-amino-acid chain: Outer surface protein C (211 aa).

A signal peptide spans 1–18; it reads MKKNTLSAILMTLFLFIS. Cysteine 19 carries the N-palmitoyl cysteine lipid modification. The S-diacylglycerol cysteine moiety is linked to residue cysteine 19.

It belongs to the OspC lipoprotein family. As to quaternary structure, homodimer. Interacts with tick I.ricinus salivary protein Iric-1, Iric-2 and Iric-3. Binds human (host) plasminogen.

It localises to the cell outer membrane. The protein localises to the cell surface. Its function is as follows. Major immunodominant protein in mammalian hosts. Required for initial stages of mammalian infection. Inhibits macrophage-mediated phagocytosis of the bacteria. Binds human plasminogen; this probably confers an extracellular protease activity on the bacteria that allows it to traverse tissue. Interaction with tick I.ricinus salivary protein Salp15 protects the bacteria from antibody-mediated killing in vitro and in vivo. The chain is Outer surface protein C from Borreliella burgdorferi (Lyme disease spirochete).